A 329-amino-acid polypeptide reads, in one-letter code: DNA-directed RNA polymerase subunit alpha (329 aa).

The alpha N-terminal domain (alpha-NTD) stretch occupies residues 1–232 (MQEMLEQLLT…YQLIAFVDLK (232 aa)). The tract at residues 246-329 (FDPIFLQPVD…PSSLVSKESA (84 aa)) is alpha C-terminal domain (alpha-CTD).

This sequence belongs to the RNA polymerase alpha chain family. As to quaternary structure, homodimer. The RNAP catalytic core consists of 2 alpha, 1 beta, 1 beta' and 1 omega subunit. When a sigma factor is associated with the core the holoenzyme is formed, which can initiate transcription.

The catalysed reaction is RNA(n) + a ribonucleoside 5'-triphosphate = RNA(n+1) + diphosphate. Its function is as follows. DNA-dependent RNA polymerase catalyzes the transcription of DNA into RNA using the four ribonucleoside triphosphates as substrates. The protein is DNA-directed RNA polymerase subunit alpha of Hydrogenovibrio crunogenus (strain DSM 25203 / XCL-2) (Thiomicrospira crunogena).